Consider the following 367-residue polypeptide: Glycolate oxidase 3 (367 aa).

The FMN hydroxy acid dehydrogenase domain maps to 1–360; the sequence is MELITNVSEY…TRNHVITDSD (360 aa). Glyoxylate is bound at residue tyrosine 25. Residues 78–80, serine 107, 128–130, and threonine 156 contribute to the FMN site; these read PSA and QLY. Tyrosine 130 provides a ligand contact to glyoxylate. Arginine 165 contributes to the glyoxylate binding site. The FMN site is built by lysine 231 and serine 253. Residues histidine 255 and arginine 258 each contribute to the glyoxylate site. Histidine 255 acts as the Proton acceptor in catalysis. FMN-binding positions include 286–290 and 309–310; these read DGGVR and GR. The Microbody targeting signal signature appears at 365–367; that stretch reads SRL.

The protein belongs to the FMN-dependent alpha-hydroxy acid dehydrogenase family. In terms of assembly, homotetramer. FMN serves as cofactor.

The protein resides in the peroxisome. It carries out the reaction glycolate + O2 = glyoxylate + H2O2. Its pathway is photosynthesis; photorespiration; glycine from 2-phosphoglycolate: step 2/3. Catalyzes the oxidation of glycolate to glyoxylate, with a reduction of O2 to H2O2. Is a key enzyme in photorespiration in green plants. The polypeptide is Glycolate oxidase 3 (GLO3) (Oryza sativa subsp. indica (Rice)).